The sequence spans 715 residues: MLKKVFETTNLKDSFQVEIGTYARNVDSSILVRYQDTVVLTTMVFSRKPNNLDFLPLTVIYQEKLYAAGKIPGSFLRREGRSNDHEILTSRLIDRSLRPLFPDYFQQEVQVINTVLSLDPDFKSELASMLGSSLSLLISEIPFFEAISGVYVGKINNEFIINPTLQQLANSTLHLIVAGTKHNVTMIEAHANEVSEQDFLEAINFAHQYIKKLCLFQENIKQQFAPVKMTKTLHQTEQIQQQSFFAKNHSQVKQAILSCNSKNDLQQLKEQILDQAKQTPFFKTIDAITVFDYEAHKKHLQITENLFQKLSKQEMRSLILQEKIRPDKRELEEIRTLESQIDLLPRAHGSALFTRGKTQSLAAVTLGCLSESKIIDGLSDEQNKRFMLHYNFPPFSVGAVGRYTAPSRREIGHGTLAEKAISQVLPEEKDFPYTIRVVSEILESNGSSSQATVCSSSLALMASGVPLKKAVAGISVGLVFDQETNKYVILSDIQGLEDHVGDMDLKIAGTNKGITALQMDLKIQGIPFKILQEAFLQAKKGRLHILEQMNQTISQPRLEVSKYAPKVCMMQIKPEKIRDIIGSGGKIINQIIESHDGVKIDIEQDGRVFVMHSNLETVKKTVAFIESLIQEIQVGTCYQASILRFLSDKQGKMIGAVAQVCPGIEGLIHVNKMKFQKITDVLKIGETVLVKCTKINERGRIDFLLLPKKTQEKNS.

Mg(2+) is bound by residues aspartate 498 and aspartate 504. A KH domain is found at 565 to 625 (PKVCMMQIKP…ETVKKTVAFI (61 aa)). In terms of domain architecture, S1 motif spans 635 to 709 (GTCYQASILR…RIDFLLLPKK (75 aa)).

This sequence belongs to the polyribonucleotide nucleotidyltransferase family. The cofactor is Mg(2+).

It localises to the cytoplasm. It carries out the reaction RNA(n+1) + phosphate = RNA(n) + a ribonucleoside 5'-diphosphate. Its function is as follows. Involved in mRNA degradation. Catalyzes the phosphorolysis of single-stranded polyribonucleotides processively in the 3'- to 5'-direction. This is Polyribonucleotide nucleotidyltransferase from Aster yellows witches'-broom phytoplasma (strain AYWB).